A 162-amino-acid chain; its full sequence is Regulator of ribonuclease activity A (162 aa).

Belongs to the RraA family. Homotrimer. Binds to both RNA-binding sites in the C-terminal region of Rne and to RhlB.

The protein localises to the cytoplasm. Its function is as follows. Globally modulates RNA abundance by binding to RNase E (Rne) and regulating its endonucleolytic activity. Can modulate Rne action in a substrate-dependent manner by altering the composition of the degradosome. Modulates RNA-binding and helicase activities of the degradosome. The protein is Regulator of ribonuclease activity A of Haemophilus influenzae (strain ATCC 51907 / DSM 11121 / KW20 / Rd).